Reading from the N-terminus, the 253-residue chain is Small ribosomal subunit protein uS2 (253 aa).

The interval 226 to 253 is disordered; the sequence is QGADNADVEKELSESVEENSAEEVDDAE. Positions 239 to 253 are enriched in acidic residues; the sequence is ESVEENSAEEVDDAE.

This sequence belongs to the universal ribosomal protein uS2 family.

The sequence is that of Small ribosomal subunit protein uS2 from Lactobacillus delbrueckii subsp. bulgaricus (strain ATCC 11842 / DSM 20081 / BCRC 10696 / JCM 1002 / NBRC 13953 / NCIMB 11778 / NCTC 12712 / WDCM 00102 / Lb 14).